The following is a 75-amino-acid chain: MQKNIHPKYFEIRAICSCGNIIPTYSTLDQHLNLDVCSACHPFYTGKQRRVNTRGRVERFNKRFSLSIMNSKKKE.

Cysteine 16, cysteine 18, cysteine 37, and cysteine 40 together coordinate Zn(2+).

This sequence belongs to the bacterial ribosomal protein bL31 family. Type A subfamily. As to quaternary structure, part of the 50S ribosomal subunit. It depends on Zn(2+) as a cofactor.

In terms of biological role, binds the 23S rRNA. The protein is Large ribosomal subunit protein bL31 of Baumannia cicadellinicola subsp. Homalodisca coagulata.